A 93-amino-acid chain; its full sequence is MVTIRLRRTGKTKKPSYRLVVADSRAPRDGRFIEIVGHYNPVRQPKELNVKADRVRYWLGVGAQPSETVVRLLKQVGVLDADGKPAPVTPIEG.

It belongs to the bacterial ribosomal protein bS16 family.

This Roseiflexus castenholzii (strain DSM 13941 / HLO8) protein is Small ribosomal subunit protein bS16.